The sequence spans 75 residues: uncharacterized protein (75 aa).

The signal sequence occupies residues 1 to 25 (MSLFYRAVALGTLSALVWYSTSILA). Residues 55-75 (YRALLAFSLVICGTLLVTCVI) traverse the membrane as a helical segment.

It is found in the host endoplasmic reticulum membrane. Its function is as follows. Plays a role in the down-regulation of the host NKG2D ligand MICA by targeting ER-resident MICA to proteasomal degradation prior to the GPI-anchoring step. In turn, MICA reduction diminishes NK-cell killing of HCMV-infected cells. This is an uncharacterized protein from Homo sapiens (Human).